The chain runs to 264 residues: MGGNKRAYYAVARGRNTGIYSTWDEASDQVKGYGGNRYKKFDSYEAAQEFCRTEGSRYSSSSGPYRRSTTSYGYSPYSSSSSNYSARHSDKYRKKISRSYSTEKDIEIFSNDTHEKSIACSDRQVVYADGSSLRNGKKGAVAGCGVFFGNDDPRNISVPLAGEEQTNNRAELQAIILALENTSGDLTIRSDSNYSIKSLTTWLPKWKKNDFKTSNSQPVKNLDLINRASDLMSDRNVSLEYVKGHSTDYGNQQADMLARRGASE.

Residues G55–H88 are disordered. Residues S56–S85 show a composition bias toward low complexity. S97 is modified (phosphoserine). Residues C120 to S263 enclose the RNase H type-1 domain. D129, E171, D191, and D255 together coordinate Mg(2+).

It belongs to the RNase H family. Mg(2+) is required as a cofactor.

It catalyses the reaction Endonucleolytic cleavage to 5'-phosphomonoester.. Functionally, endonuclease that specifically degrades the RNA of RNA-DNA hybrids. In Schizosaccharomyces pombe (strain 972 / ATCC 24843) (Fission yeast), this protein is Ribonuclease H (rnh1).